The sequence spans 614 residues: 1-deoxy-D-xylulose-5-phosphate synthase (614 aa).

Residues His74 and Gly115–Ser117 contribute to the thiamine diphosphate site. Asp146 is a binding site for Mg(2+). Thiamine diphosphate contacts are provided by residues Gly147 to Ala148, Asn175, Tyr282, and Glu363. Mg(2+) is bound at residue Asn175.

The protein belongs to the transketolase family. DXPS subfamily. Homodimer. The cofactor is Mg(2+). Thiamine diphosphate serves as cofactor.

It catalyses the reaction D-glyceraldehyde 3-phosphate + pyruvate + H(+) = 1-deoxy-D-xylulose 5-phosphate + CO2. It participates in metabolic intermediate biosynthesis; 1-deoxy-D-xylulose 5-phosphate biosynthesis; 1-deoxy-D-xylulose 5-phosphate from D-glyceraldehyde 3-phosphate and pyruvate: step 1/1. Functionally, catalyzes the acyloin condensation reaction between C atoms 2 and 3 of pyruvate and glyceraldehyde 3-phosphate to yield 1-deoxy-D-xylulose-5-phosphate (DXP). In Methylobacillus flagellatus (strain ATCC 51484 / DSM 6875 / VKM B-1610 / KT), this protein is 1-deoxy-D-xylulose-5-phosphate synthase.